Reading from the N-terminus, the 469-residue chain is GDP-fucose protein O-fucosyltransferase 3 (469 aa).

Residues 1–9 (MVNRIWEKR) are Cytoplasmic-facing. Residues 10–30 (FWISCFFIIFLFILVIFQVMV) form a helical; Signal-anchor for type II membrane protein membrane-spanning segment. Residues 31-469 (ELGRFEKKET…EFWNLVFKFW (439 aa)) are Lumenal-facing. N-linked (GlcNAc...) asparagine glycans are attached at residues Asn-100, Asn-158, Asn-308, and Asn-333. An intrachain disulfide couples Cys-379 to Cys-382. N-linked (GlcNAc...) asparagine glycosylation is present at Asn-455.

Belongs to the glycosyltransferase 10 family.

The protein resides in the endoplasmic reticulum membrane. The catalysed reaction is L-threonyl-[protein] + GDP-beta-L-fucose = 3-O-(alpha-L-fucosyl)-L-threonyl-[protein] + GDP + H(+). It catalyses the reaction L-seryl-[protein] + GDP-beta-L-fucose = 3-O-(alpha-L-fucosyl)-L-seryl-[protein] + GDP + H(+). It functions in the pathway protein modification; protein glycosylation. Its function is as follows. Protein O-fucosyltransferase that specifically catalyzes O-fucosylation of serine or threonine residues in EMI domains of target proteins. Attaches fucose through an O-glycosidic linkage. O-fucosylation of EMI domain-containing proteins may be required for facilitating protein folding and secretion. The chain is GDP-fucose protein O-fucosyltransferase 3 (fut10) from Xenopus laevis (African clawed frog).